Reading from the N-terminus, the 89-residue chain is Small ribosomal subunit protein uS15 (89 aa).

The protein belongs to the universal ribosomal protein uS15 family. As to quaternary structure, part of the 30S ribosomal subunit. Forms a bridge to the 50S subunit in the 70S ribosome, contacting the 23S rRNA.

One of the primary rRNA binding proteins, it binds directly to 16S rRNA where it helps nucleate assembly of the platform of the 30S subunit by binding and bridging several RNA helices of the 16S rRNA. Its function is as follows. Forms an intersubunit bridge (bridge B4) with the 23S rRNA of the 50S subunit in the ribosome. This is Small ribosomal subunit protein uS15 from Streptococcus agalactiae serotype Ia (strain ATCC 27591 / A909 / CDC SS700).